The following is a 499-amino-acid chain: Cryptochrome-1 (499 aa).

FAD is bound by residues Arg-190, Ser-218, Ser-220, Gln-261, His-328, 360–362, Cys-366, and Asn-369; that span reads DAD.

Belongs to the DNA photolyase class-1 family. Interacts with tim and per; promoted by light conditions. Requires FAD as cofactor.

The protein localises to the cytoplasm. Its subcellular location is the perinuclear region. The protein resides in the nucleus. Blue light-dependent regulator that is the input of the circadian feedback loop. Has no photolyase activity for cyclobutane pyrimidine dimers or 6-4 photoproducts. Regulation of expression by light suggests a role in photoreception for locomotor activity rhythms. Functions, together with per, as a transcriptional repressor required for the oscillation of peripheral circadian clocks and for the correct specification of clock cells. Genes directly activated by the transcription factors Clock (Clk) and cycle (cyc) are repressed by cry. This Culex quinquefasciatus (Southern house mosquito) protein is Cryptochrome-1.